Consider the following 318-residue polypeptide: Transaldolase (318 aa).

K126 acts as the Schiff-base intermediate with substrate in catalysis.

This sequence belongs to the transaldolase family. Type 1 subfamily. In terms of assembly, homodimer.

The protein resides in the cytoplasm. The enzyme catalyses D-sedoheptulose 7-phosphate + D-glyceraldehyde 3-phosphate = D-erythrose 4-phosphate + beta-D-fructose 6-phosphate. It participates in carbohydrate degradation; pentose phosphate pathway; D-glyceraldehyde 3-phosphate and beta-D-fructose 6-phosphate from D-ribose 5-phosphate and D-xylulose 5-phosphate (non-oxidative stage): step 2/3. Its function is as follows. Transaldolase is important for the balance of metabolites in the pentose-phosphate pathway. This Variovorax paradoxus (strain S110) protein is Transaldolase.